The following is a 239-amino-acid chain: Pyridoxine 5'-phosphate synthase (239 aa).

Asn-7 contributes to the 3-amino-2-oxopropyl phosphate binding site. 9 to 10 lines the 1-deoxy-D-xylulose 5-phosphate pocket; that stretch reads DH. Residue Arg-18 coordinates 3-amino-2-oxopropyl phosphate. The active-site Proton acceptor is the His-43. Residues Arg-45 and His-50 each coordinate 1-deoxy-D-xylulose 5-phosphate. Glu-70 (proton acceptor) is an active-site residue. Residue Thr-100 participates in 1-deoxy-D-xylulose 5-phosphate binding. His-191 functions as the Proton donor in the catalytic mechanism. 3-amino-2-oxopropyl phosphate contacts are provided by residues Gly-192 and 213-214; that span reads GH.

This sequence belongs to the PNP synthase family. Homooctamer; tetramer of dimers.

It is found in the cytoplasm. It carries out the reaction 3-amino-2-oxopropyl phosphate + 1-deoxy-D-xylulose 5-phosphate = pyridoxine 5'-phosphate + phosphate + 2 H2O + H(+). The protein operates within cofactor biosynthesis; pyridoxine 5'-phosphate biosynthesis; pyridoxine 5'-phosphate from D-erythrose 4-phosphate: step 5/5. Catalyzes the complicated ring closure reaction between the two acyclic compounds 1-deoxy-D-xylulose-5-phosphate (DXP) and 3-amino-2-oxopropyl phosphate (1-amino-acetone-3-phosphate or AAP) to form pyridoxine 5'-phosphate (PNP) and inorganic phosphate. The polypeptide is Pyridoxine 5'-phosphate synthase (Geobacter sp. (strain M21)).